The following is a 288-amino-acid chain: Thymidylate synthase (288 aa).

DUMP contacts are provided by residues Arg-21 and 150-151; that span reads RR. The active-site Nucleophile is Cys-170. Residues 190–193, Asn-201, and 231–233 contribute to the dUMP site; these read RSGD and HIY. A (6R)-5,10-methylene-5,6,7,8-tetrahydrofolate-binding site is contributed by Asp-193. Position 287 (Ala-287) interacts with (6R)-5,10-methylene-5,6,7,8-tetrahydrofolate.

Belongs to the thymidylate synthase family. Bacterial-type ThyA subfamily. As to quaternary structure, homodimer.

It localises to the cytoplasm. The catalysed reaction is dUMP + (6R)-5,10-methylene-5,6,7,8-tetrahydrofolate = 7,8-dihydrofolate + dTMP. It functions in the pathway pyrimidine metabolism; dTTP biosynthesis. Catalyzes the reductive methylation of 2'-deoxyuridine-5'-monophosphate (dUMP) to 2'-deoxythymidine-5'-monophosphate (dTMP) while utilizing 5,10-methylenetetrahydrofolate (mTHF) as the methyl donor and reductant in the reaction, yielding dihydrofolate (DHF) as a by-product. This enzymatic reaction provides an intracellular de novo source of dTMP, an essential precursor for DNA biosynthesis. The protein is Thymidylate synthase of Acholeplasma laidlawii (strain PG-8A).